The chain runs to 107 residues: Nucleoid-associated protein RP866 (107 aa).

Belongs to the YbaB/EbfC family. As to quaternary structure, homodimer.

The protein localises to the cytoplasm. It localises to the nucleoid. Its function is as follows. Binds to DNA and alters its conformation. May be involved in regulation of gene expression, nucleoid organization and DNA protection. The chain is Nucleoid-associated protein RP866 from Rickettsia prowazekii (strain Madrid E).